A 184-amino-acid chain; its full sequence is UPF0149 protein PSEEN5316 (184 aa).

Belongs to the UPF0149 family.

The polypeptide is UPF0149 protein PSEEN5316 (Pseudomonas entomophila (strain L48)).